The sequence spans 416 residues: Squalene synthase (416 aa).

NADP(+)-binding residues include arginine 52 and arginine 77. Residues aspartate 80, glutamate 83, and aspartate 84 each contribute to the Mg(2+) site. NADP(+) is bound at residue arginine 218. The chain crosses the membrane as a helical span at residues 284 to 304; sequence SVFNFCAIPQVMAIATLAACY. NADP(+) contacts are provided by lysine 315 and arginine 317. Residues 384-404 traverse the membrane as a helical segment; that stretch reads PIYLSFIMLLAALSWQYLSTL.

Belongs to the phytoene/squalene synthase family. Mg(2+) is required as a cofactor.

Its subcellular location is the endoplasmic reticulum membrane. The enzyme catalyses 2 (2E,6E)-farnesyl diphosphate + NADPH + H(+) = squalene + 2 diphosphate + NADP(+). It catalyses the reaction 2 (2E,6E)-farnesyl diphosphate + NADH + H(+) = squalene + 2 diphosphate + NAD(+). It carries out the reaction presqualene diphosphate + NADH + H(+) = squalene + diphosphate + NAD(+). The catalysed reaction is presqualene diphosphate + NADPH + H(+) = squalene + diphosphate + NADP(+). The enzyme catalyses 2 (2E,6E)-farnesyl diphosphate = presqualene diphosphate + diphosphate. The protein operates within terpene metabolism; lanosterol biosynthesis; lanosterol from farnesyl diphosphate: step 1/3. Functionally, catalyzes the condensation of 2 farnesyl pyrophosphate (FPP) moieties to form squalene. Proceeds in two distinct steps. In the first half-reaction, two molecules of FPP react to form the stable presqualene diphosphate intermediate (PSQPP), with concomitant release of a proton and a molecule of inorganic diphosphate. In the second half-reaction, PSQPP undergoes heterolysis, isomerization, and reduction with NADPH or NADH to form squalene. It is the first committed enzyme of the sterol biosynthesis pathway. This is Squalene synthase (Fdft1) from Rattus norvegicus (Rat).